We begin with the raw amino-acid sequence, 905 residues long: DNA gyrase subunit A (905 aa).

The 490-residue stretch at 35 to 524 (IPDVRDGLKP…GEFDQDIEDL (490 aa)) folds into the Topo IIA-type catalytic domain. Y123 acts as the O-(5'-phospho-DNA)-tyrosine intermediate in catalysis. Residues 551-557 (QKRGGKG) carry the GyrA-box motif. A disordered region spans residues 882-905 (IAESSDDNEEDSEFEEEVAEEGSE). The span at 885 to 905 (SSDDNEEDSEFEEEVAEEGSE) shows a compositional bias: acidic residues.

This sequence belongs to the type II topoisomerase GyrA/ParC subunit family. In terms of assembly, heterotetramer, composed of two GyrA and two GyrB chains. In the heterotetramer, GyrA contains the active site tyrosine that forms a transient covalent intermediate with DNA, while GyrB binds cofactors and catalyzes ATP hydrolysis.

The protein resides in the cytoplasm. The catalysed reaction is ATP-dependent breakage, passage and rejoining of double-stranded DNA.. In terms of biological role, a type II topoisomerase that negatively supercoils closed circular double-stranded (ds) DNA in an ATP-dependent manner to modulate DNA topology and maintain chromosomes in an underwound state. Negative supercoiling favors strand separation, and DNA replication, transcription, recombination and repair, all of which involve strand separation. Also able to catalyze the interconversion of other topological isomers of dsDNA rings, including catenanes and knotted rings. Type II topoisomerases break and join 2 DNA strands simultaneously in an ATP-dependent manner. The polypeptide is DNA gyrase subunit A (Rickettsia bellii (strain RML369-C)).